Consider the following 180-residue polypeptide: Putative manganese efflux pump MntP (180 aa).

5 helical membrane-spanning segments follow: residues 6–26 (VLLLAGALGTDAFSLCLGLGL), 33–53 (MAWMLVGLIVALHVVLPVAGW), 63–83 (VGRWAAYLGAAILFYLGVKMV), 101–121 (GFLGLTVLAGSVSMDALSVGF), and 130–150 (LLLTAGVIGLVAGLMSAAAFV).

The protein belongs to the MntP (TC 9.B.29) family.

Its subcellular location is the cell membrane. Functionally, probably functions as a manganese efflux pump. In Desulforudis audaxviator (strain MP104C), this protein is Putative manganese efflux pump MntP.